The following is a 321-amino-acid chain: Glucan 1,3-beta-glucosidase (321 aa).

Positions 1-21 (MQFLSSFVFAALALLPLSAMA) are cleaved as a signal peptide. Asn-39 and Asn-99 each carry an N-linked (GlcNAc...) asparagine glycan. Glu-141 serves as the catalytic Proton donor. N-linked (GlcNAc...) asparagine glycans are attached at residues Asn-210, Asn-213, and Asn-237. Catalysis depends on Glu-244, which acts as the Nucleophile. 2 N-linked (GlcNAc...) asparagine glycosylation sites follow: Asn-309 and Asn-317.

It belongs to the glycosyl hydrolase 17 family.

Its subcellular location is the secreted. The protein resides in the cell wall. It catalyses the reaction Successive hydrolysis of beta-D-glucose units from the non-reducing ends of (1-&gt;3)-beta-D-glucans, releasing alpha-glucose.. Its function is as follows. Glucanases possibly play a role in cell expansion during growth, in cell-cell fusion during mating, and in spore release during sporulation. This enzyme may be involved in beta-glucan degradation and also function biosynthetically as a transglycosylase. The protein is Glucan 1,3-beta-glucosidase (bgl2) of Schizosaccharomyces pombe (strain 972 / ATCC 24843) (Fission yeast).